The following is a 331-amino-acid chain: Tyrosine--tRNA ligase (331 aa).

L-tyrosine is bound by residues Tyr31, Tyr155, Gln159, Asp162, and Gln177. The 'KMSKS' region signature appears at 218-222; the sequence is KMSKS. Lys221 is a binding site for ATP.

It belongs to the class-I aminoacyl-tRNA synthetase family. TyrS type 4 subfamily. As to quaternary structure, homodimer.

The protein resides in the cytoplasm. The enzyme catalyses tRNA(Tyr) + L-tyrosine + ATP = L-tyrosyl-tRNA(Tyr) + AMP + diphosphate + H(+). In terms of biological role, catalyzes the attachment of tyrosine to tRNA(Tyr) in a two-step reaction: tyrosine is first activated by ATP to form Tyr-AMP and then transferred to the acceptor end of tRNA(Tyr). This is Tyrosine--tRNA ligase from Thermoplasma volcanium (strain ATCC 51530 / DSM 4299 / JCM 9571 / NBRC 15438 / GSS1).